We begin with the raw amino-acid sequence, 593 residues long: DNA primase (593 aa).

A CHC2-type zinc finger spans residues 40–64; sequence CPFHHEKTPSFTVSQKKQFYHCFGC. The region spanning 260–342 is the Toprim domain; sequence KQLLVVEGYM…GRQLKFIFLP (83 aa). Residues Glu266, Asp310, and Asp312 each coordinate Mg(2+).

Belongs to the DnaG primase family. Monomer. Interacts with DnaB. The cofactor is Zn(2+). Mg(2+) serves as cofactor.

The enzyme catalyses ssDNA + n NTP = ssDNA/pppN(pN)n-1 hybrid + (n-1) diphosphate.. RNA polymerase that catalyzes the synthesis of short RNA molecules used as primers for DNA polymerase during DNA replication. The chain is DNA primase from Haemophilus influenzae (strain ATCC 51907 / DSM 11121 / KW20 / Rd).